Reading from the N-terminus, the 256-residue chain is MLPKELVRFKELGNQITILTAWDSLSSAIVEAAGADVVLVGDSLAMFIHGHTTTLPVTLEQMLHHTQAVGRGFLSPKNKQPLVVCDLPFLSYQCGEDKAVAAAGTLLKNSCAAAVKIEGAEPEVISVIERLIRMGIPVMGHLGLTPQSVNNLGYHRQAEDALGQEKLVTQALKIEQVGCFSVVLEHVPSKVASKVTQMLKIPVIGIGAGEECDGQVRVTADLLGLTDKQPPFAKPLIDGRSLFIESLTSWVDQLRN.

Mg(2+) contacts are provided by Asp-42 and Asp-86. 3-methyl-2-oxobutanoate is bound by residues 42-43 (DS), Asp-86, and Lys-116. A Mg(2+)-binding site is contributed by Glu-118. Residue Glu-185 is the Proton acceptor of the active site.

This sequence belongs to the PanB family. As to quaternary structure, homodecamer; pentamer of dimers. Requires Mg(2+) as cofactor.

It is found in the cytoplasm. The catalysed reaction is 3-methyl-2-oxobutanoate + (6R)-5,10-methylene-5,6,7,8-tetrahydrofolate + H2O = 2-dehydropantoate + (6S)-5,6,7,8-tetrahydrofolate. It participates in cofactor biosynthesis; (R)-pantothenate biosynthesis; (R)-pantoate from 3-methyl-2-oxobutanoate: step 1/2. Functionally, catalyzes the reversible reaction in which hydroxymethyl group from 5,10-methylenetetrahydrofolate is transferred onto alpha-ketoisovalerate to form ketopantoate. This Prochlorococcus marinus (strain SARG / CCMP1375 / SS120) protein is 3-methyl-2-oxobutanoate hydroxymethyltransferase.